Reading from the N-terminus, the 601-residue chain is Sestrin homolog (601 aa).

The segment covering 1-11 has biased composition (polar residues); sequence MISMGMTSKGQ. Residues 1-58 are disordered; that stretch reads MISMGMTSKGQNVDGAPAGNSSSEWIISSSSSPFQANKRYSLDPPFGSDYSPPASPQN. A glycan (N-linked (GlcNAc...) asparagine) is linked at N20. Over residues 21–32 the composition is skewed to low complexity; sequence SSSEWIISSSSS. N322 and N330 each carry an N-linked (GlcNAc...) asparagine glycan. A disordered region spans residues 355 to 425; that stretch reads RRSQQQDDDD…DSSSSTLSQS (71 aa). Residues 368–379 are compositionally biased toward basic and acidic residues; it reads LHDRQQDFHNAG. Residues 380–425 show a composition bias toward low complexity; that stretch reads DDSQSSNNNTTTTTTTTTTTTTTTNTNTTSNSAGGGDSSSSTLSQS. N-linked (GlcNAc...) asparagine glycans are attached at residues N387, N388, N406, N438, and N499.

Belongs to the sestrin family.

The protein resides in the nucleus. It is found in the cytoplasm. Functionally, may function as a negative feedback regulator of TOR function. In Dictyostelium discoideum (Social amoeba), this protein is Sestrin homolog.